A 199-amino-acid polypeptide reads, in one-letter code: Thymidine kinase (199 aa).

ATP-binding positions include 9–16 (GAMSSGKS) and 93–96 (DEAQ). The Proton acceptor role is filled by E94. Zn(2+)-binding residues include C151, C154, C188, and H191.

Belongs to the thymidine kinase family. Homotetramer.

Its subcellular location is the cytoplasm. It carries out the reaction thymidine + ATP = dTMP + ADP + H(+). The chain is Thymidine kinase from Lactobacillus johnsonii (strain CNCM I-12250 / La1 / NCC 533).